A 1446-amino-acid chain; its full sequence is MKDYIYQNTLINKKQLKELLAWSFSKYDSMQASLLADELKYLGFKYATQAGISISIEDLKVPATKNEMLEKANKDILNAEKICLKGKITDVERFQKIIDTWSIASESLKDNVVSYFKTYDPLNSVYIMAFSGARGNLSQVRQLVGMRGLMADPSGEIMRVPIKKNFREGLTITDYLMSGYGARKGIVDTALKTANSGYLTRRLIDIAQDIVIREKDCLTSSSFLIDSQTKFDTEQLIGRVLLKSVYDSKTEKLIAKANTQLTLDLLNLFNQKQISKFYIRSPLTCNLYHSICQMCYGWDLSNQNLVDLGEAVGILAGQSIGEPGTQLTMRTFHTGGIFTSEARQQIISPKNGIIKFSKILKTIILRTNRGEDVLLTKNSGSLILIPEKHTDEIIQIELLRNTMLFVKSNQYIKQSAIIGELISTDKQTLTERKPILSDTAGEIFIPRLKTRMNLITQNRLLWILSGQVYQAPSNSFLNFYTDHKINKNSYIFRTKLINQYSGYTKVLNQNKNLLEQKIQITNETYFLENSYVQKILKPITNKNYLLNFNNLTYLITLKDSNSKNWKRCKKYKPFATSFNNNFKTLTGGIMYYDQRIKQKFDSFNTLISYNIAYEISKEDYDKVSKDHYENYLKKLENKIDKNGFIFYQNFLNYQEMESIFLKFKLKKKIVHNSLIWLSEETYKLNCDKNILLVENGNFIAKNFEIIPNIISKTAGIITVSQKNNMIEEIAIKAGFVYQGKQFEQLDKKVYYPGEIIFDNIKITQPSLCEHINNKSNNQLLIRPFAIYEIPKEKTVKSLFSDKNNSKSIFTITNKITYLYKTNQKIKTSNHINLISQNINLKAKNSVQNNTIIDLSNSFKTKRLNLRISENLLLKHYIPAHLKYTNLQYCLLVEPTQFIDSYTTLGYLESLITNSLEIVKFKSKRANKKQVFLISNKDCITVRKEQGKNKTANELIIDNINVNQTGKVLIDNGQFLTVQKGRPYFFPNCKSDDSKEKLDLQYKLIGLNNTISNNTNTFLNYYDVTKRSLVERLGPNKKSYGFKVKFSKMFIKKNGKFYSSPIPLFLNNFSIIKEEQKRLNEGKNEINNFIIKNTQLKIKQCLPLLLKSSELVTNKIKRKTPFNNNLTGLKFLKYPFNKSIGIHSLTEDYFEQEVNNVYCKNGEFIEKGEVIGLLNFEKEITGDIVQGLPRIEELLEARKKKPTNKHLATNQKKSLLIQKTSIDSSFEFQKLGTTIKENDKINPHNLLKIYFNYYGIKKQFFSNKEMFALSYRLTDNYEASYRTFKKIQLLILNAVQSVYESQGVSIANKHLEVIIKQMTTKVLITHEGHTPLLPREVVDLYHIQYINKIIEAHNKRPAYYVPLLLGITKAALNNPSFISAASFQETTRVLTKAAIEGRVDWLRGLKENIIIGHLIPSGTGYQSYSNCFNQLAQSKTKINLEKIKIKI.

Cysteine 217, cysteine 285, cysteine 292, and cysteine 295 together coordinate Zn(2+).

The protein belongs to the RNA polymerase beta' chain family. RpoC2 subfamily. In terms of assembly, in plastids the minimal PEP RNA polymerase catalytic core is composed of four subunits: alpha, beta, beta', and beta''. When a (nuclear-encoded) sigma factor is associated with the core the holoenzyme is formed, which can initiate transcription. Zn(2+) is required as a cofactor.

It is found in the plastid. It localises to the chloroplast. The enzyme catalyses RNA(n) + a ribonucleoside 5'-triphosphate = RNA(n+1) + diphosphate. In terms of biological role, DNA-dependent RNA polymerase catalyzes the transcription of DNA into RNA using the four ribonucleoside triphosphates as substrates. The chain is DNA-directed RNA polymerase subunit beta'' from Thalassiosira pseudonana (Marine diatom).